The following is a 671-amino-acid chain: Protein KHNYN (671 aa).

Disordered stretches follow at residues 234–274 (RVAG…LSGE), 294–327 (EVAPLKGKASGKQEVPQQRGGFSVQGEPSGAHVP), 344–402 (HNGS…GGNL), and 577–626 (GPTL…RKTR). Over residues 250-272 (TVEKEERKQDAVRDMGSGRKELS) the composition is skewed to basic and acidic residues. Positions 351–365 (PRVPSPPPAPEPPWP) are enriched in pro residues. At S355 the chain carries Phosphoserine. Residues 367 to 381 (GDRDRDRDRGDRGDK) are compositionally biased toward basic and acidic residues. The RNase NYN domain maps to 430–582 (LRHIVIDGSN…LGRNGPTLDE (153 aa)). A compositionally biased stretch (polar residues) spans 591–612 (QGSSKTQQPSKGSTEQANQQQG).

The protein belongs to the N4BP1 family.

The sequence is that of Protein KHNYN (Khnyn) from Mus musculus (Mouse).